The chain runs to 362 residues: MYSASVTAPVNIATLKYWGKRDKSLNLPTNSSISVTLSQDDLRTLTTASASESFEKDQLWLNGKLESLDTPRTQACLADLRKLRASIEQSPDTPKLSQMKLHIVSENNFPTAAGLASSAAGFAALVSAIAKLYELPQDMSELSKIARKGSGSACRSLFGGFVAWEMGTLPDGQDSKAVEIAPLEHWPSLRAVILVVSDDKKDTPSTTGMQSTVATSDLFAHRIAEVVPQRFEAMKKAILDKDFPKFAELTMKDSNSFHAVCLDSYPPIFYLNDTSKKIIKMVETINQQEVVAAYTFDAGPNAVIYYDEANQDKVLSLLYKHFGHVPGWKTHYTAETPVAGVSRIIQTSIGPGPQETSESLTK.

Residues 17-20 (YWGK), Arg72, 150-155 (SGSACR), and Thr206 contribute to the (R)-5-diphosphomevalonate site.

This sequence belongs to the diphosphomevalonate decarboxylase family. In terms of assembly, homodimer.

It carries out the reaction (R)-5-diphosphomevalonate + ATP = isopentenyl diphosphate + ADP + phosphate + CO2. The protein operates within isoprenoid biosynthesis; isopentenyl diphosphate biosynthesis via mevalonate pathway; isopentenyl diphosphate from (R)-mevalonate: step 3/3. In terms of biological role, diphosphomevalonate decarboxylase; part of the second module of ergosterol biosynthesis pathway that includes the middle steps of the pathway. MVD1 converts diphosphomevalonate into isopentenyl diphosphate. The second module is carried out in the vacuole and involves the formation of farnesyl diphosphate, which is also an important intermediate in the biosynthesis of ubiquinone, dolichol, heme and prenylated proteins. Activity by the mevalonate kinase ERG12 first converts mevalonate into 5-phosphomevalonate. 5-phosphomevalonate is then further converted to 5-diphosphomevalonate by the phosphomevalonate kinase ERG8. The diphosphomevalonate decarboxylase MVD then produces isopentenyl diphosphate. The isopentenyl-diphosphate delta-isomerase IDI1 then catalyzes the 1,3-allylic rearrangement of the homoallylic substrate isopentenyl (IPP) to its highly electrophilic allylic isomer, dimethylallyl diphosphate (DMAPP). Finally the farnesyl diphosphate synthase ERG20 catalyzes the sequential condensation of isopentenyl pyrophosphate with dimethylallyl pyrophosphate, and then with the resultant geranylpyrophosphate to the ultimate product farnesyl pyrophosphate. This chain is Diphosphomevalonate decarboxylase, found in Candida albicans (strain SC5314 / ATCC MYA-2876) (Yeast).